We begin with the raw amino-acid sequence, 306 residues long: Lipoyl synthase 2 (306 aa).

7 residues coordinate [4Fe-4S] cluster: Cys-49, Cys-54, Cys-60, Cys-75, Cys-79, Cys-82, and Ser-300. One can recognise a Radical SAM core domain in the interval 61 to 289; it reads YAAGTATFLL…AEVACKLGFA (229 aa).

It belongs to the radical SAM superfamily. Lipoyl synthase family. Requires [4Fe-4S] cluster as cofactor.

The protein resides in the cytoplasm. It catalyses the reaction [[Fe-S] cluster scaffold protein carrying a second [4Fe-4S](2+) cluster] + N(6)-octanoyl-L-lysyl-[protein] + 2 oxidized [2Fe-2S]-[ferredoxin] + 2 S-adenosyl-L-methionine + 4 H(+) = [[Fe-S] cluster scaffold protein] + N(6)-[(R)-dihydrolipoyl]-L-lysyl-[protein] + 4 Fe(3+) + 2 hydrogen sulfide + 2 5'-deoxyadenosine + 2 L-methionine + 2 reduced [2Fe-2S]-[ferredoxin]. Its pathway is protein modification; protein lipoylation via endogenous pathway; protein N(6)-(lipoyl)lysine from octanoyl-[acyl-carrier-protein]: step 2/2. Catalyzes the radical-mediated insertion of two sulfur atoms into the C-6 and C-8 positions of the octanoyl moiety bound to the lipoyl domains of lipoate-dependent enzymes, thereby converting the octanoylated domains into lipoylated derivatives. The protein is Lipoyl synthase 2 of Prochlorococcus marinus (strain MIT 9313).